We begin with the raw amino-acid sequence, 275 residues long: Large ribosomal subunit protein uL2 (275 aa).

Over residues 35–49 the composition is skewed to polar residues; it reads DSQSSTAGRNNNGRI. 2 disordered regions span residues 35-59 and 224-275; these read DSQSSTAGRNNNGRITTRHKGGGHK and AMNP…RHKR. The span at 50-59 shows a compositional bias: basic residues; sequence TTRHKGGGHK.

The protein belongs to the universal ribosomal protein uL2 family. Part of the 50S ribosomal subunit. Forms a bridge to the 30S subunit in the 70S ribosome.

Its function is as follows. One of the primary rRNA binding proteins. Required for association of the 30S and 50S subunits to form the 70S ribosome, for tRNA binding and peptide bond formation. It has been suggested to have peptidyltransferase activity; this is somewhat controversial. Makes several contacts with the 16S rRNA in the 70S ribosome. The protein is Large ribosomal subunit protein uL2 of Burkholderia cenocepacia (strain HI2424).